A 377-amino-acid chain; its full sequence is Succinyl-diaminopimelate desuccinylase (377 aa).

His-66 lines the Zn(2+) pocket. The active site involves Asp-68. Residue Asp-99 coordinates Zn(2+). The active-site Proton acceptor is Glu-133. 3 residues coordinate Zn(2+): Glu-134, Glu-163, and His-349.

This sequence belongs to the peptidase M20A family. DapE subfamily. Homodimer. Zn(2+) is required as a cofactor. Requires Co(2+) as cofactor.

The catalysed reaction is N-succinyl-(2S,6S)-2,6-diaminopimelate + H2O = (2S,6S)-2,6-diaminopimelate + succinate. Its pathway is amino-acid biosynthesis; L-lysine biosynthesis via DAP pathway; LL-2,6-diaminopimelate from (S)-tetrahydrodipicolinate (succinylase route): step 3/3. Functionally, catalyzes the hydrolysis of N-succinyl-L,L-diaminopimelic acid (SDAP), forming succinate and LL-2,6-diaminopimelate (DAP), an intermediate involved in the bacterial biosynthesis of lysine and meso-diaminopimelic acid, an essential component of bacterial cell walls. This is Succinyl-diaminopimelate desuccinylase from Legionella pneumophila (strain Corby).